The chain runs to 504 residues: Cholesterol 7-alpha-monooxygenase (504 aa).

Cys-444 provides a ligand contact to heme.

This sequence belongs to the cytochrome P450 family. Heme is required as a cofactor.

It localises to the endoplasmic reticulum membrane. The protein localises to the microsome membrane. The catalysed reaction is cholesterol + reduced [NADPH--hemoprotein reductase] + O2 = 7alpha-hydroxycholesterol + oxidized [NADPH--hemoprotein reductase] + H2O + H(+). It functions in the pathway lipid metabolism; bile acid biosynthesis. Its function is as follows. Catalyzes a rate-limiting step in cholesterol catabolism and bile acid biosynthesis by introducing a hydrophilic moiety at position 7 of cholesterol. Important for cholesterol homeostasis. This is Cholesterol 7-alpha-monooxygenase (CYP7A1) from Cricetulus griseus (Chinese hamster).